A 382-amino-acid polypeptide reads, in one-letter code: LIM homeobox transcription factor 1-alpha (382 aa).

2 LIM zinc-binding domains span residues 33–92 (SVCE…LFAV) and 92–154 (VKCG…EREL). 2 disordered regions span residues 161-208 (AASD…QQRR) and 252-286 (KLAR…MEGI). Residues 195–254 (PKRPRTILTTQQRRAFKASFEVSSKPCRKVRETLAAETGLSVRVVQVWFQNQRAKMKKLA) constitute a DNA-binding region (homeobox). Positions 256 to 269 (RQQQQQQDQQNTQR) are enriched in low complexity.

It localises to the nucleus. Functionally, acts as a transcriptional activator by binding to an A/T-rich sequence, the FLAT element, in the insulin gene promoter. Required for development of the roof plate and, in turn, for specification of dorsal cell fates in the CNS and developing vertebrae. This is LIM homeobox transcription factor 1-alpha (Lmx1a) from Mus musculus (Mouse).